The following is a 204-amino-acid chain: Arginine exporter protein ArgO (204 aa).

The next 6 membrane-spanning stretches (helical) occupy residues 1 to 21 (MFAV…PLGP), 37 to 57 (LMVA…GIFG), 67 to 87 (LLLG…GWGA), 111 to 131 (IIAT…DTFV), 147 to 167 (WFAL…ALLA), and 179 to 199 (VQRV…LQLA).

The protein belongs to the LysE/ArgO transporter (TC 2.A.75) family.

It is found in the cell inner membrane. It catalyses the reaction L-arginine(in) = L-arginine(out). Its function is as follows. Involved in the export of arginine. Important to control the intracellular level of arginine and the correct balance between arginine and lysine. This chain is Arginine exporter protein ArgO, found in Pectobacterium carotovorum subsp. carotovorum (strain PC1).